The chain runs to 859 residues: Volume-regulated anion channel subunit LRRC8D (859 aa).

Over 1–22 (MFTLAEVASLNDIQPTYRILKP) the chain is Cytoplasmic. A helical transmembrane segment spans residues 23–48 (WWDVFMDYLAVVMLMVAIFAGTMQLT). Residues 49 to 164 (KDQVVCLPVL…YHLALPWYSK (116 aa)) lie on the Extracellular side of the membrane. A disulfide bridge links C54 with C355. The disordered stretch occupies residues 110–138 (IPLQATHPHAESTLPNQEAKKEKRDPTGR). A compositionally biased stretch (basic and acidic residues) spans 127–138 (EAKKEKRDPTGR). The chain crosses the membrane as a helical span at residues 165-183 (YFPYLALIHTIILMVSSNF). At 184–309 (WFKYPKTCSK…EDSDLIYKLY (126 aa)) the chain is on the cytoplasmic side. Positions 222–252 (SEENKQRITGAQTLPKHVSTSSDEGSPSAST) are disordered. Residues 228 to 252 (RITGAQTLPKHVSTSSDEGSPSAST) show a composition bias toward polar residues. Residues S242, S243, and S247 each carry the phosphoserine modification. Residues 310 to 331 (VVQTLIKTAKFIFILCYTANFV) traverse the membrane as a helical segment. Residues 332–361 (NAISFEHVCKPKVEHLTGYEVFECTHNMAY) are Extracellular-facing. A helical membrane pass occupies residues 362–387 (MLKKLLISYISIICVYGFICLYTLFW). Residues 388–859 (LFRIPLKEYS…DVNVPFANGI (472 aa)) lie on the Cytoplasmic side of the membrane. 13 LRR repeats span residues 515–535 (NLQE…AFSF), 539–560 (HLRC…VYLL), 562–583 (NLRE…IGLE), 590–610 (HLKI…ITDV), 613–633 (HLTK…NSLK), 637–658 (NVAE…IFSL), 660–681 (NLQE…ISFQ), 685–706 (RLTC…ITHV), 708–729 (NLES…VFSL), 731–752 (KLRC…IGLL), 754–775 (NLQH…LFKC), 777–798 (KLRT…ISQL), and 800–821 (QLTQ…LGQC).

The protein belongs to the LRRC8 family. In terms of assembly, heterohexamer; oligomerizes with other LRRC8 proteins (LRRC8A, LRRC8B, LRRC8C and/or LRRC8E) to form a heterohexamer. In vivo, the subunit composition may depend primarily on expression levels, and heterooligomeric channels containing various proportions of the different LRRC8 proteins may coexist. Expressed in pancreatic beta cells. Also expressed in glucagon-secreting pancreatic alpha cells.

The protein localises to the cell membrane. It is found in the endoplasmic reticulum membrane. It carries out the reaction chloride(in) = chloride(out). The catalysed reaction is iodide(out) = iodide(in). The enzyme catalyses taurine(out) = taurine(in). Non-essential component of the volume-regulated anion channel (VRAC, also named VSOAC channel), an anion channel required to maintain a constant cell volume in response to extracellular or intracellular osmotic changes. The VRAC channel conducts iodide better than chloride and can also conduct organic osmolytes like taurine. Plays a redundant role in the efflux of amino acids, such as aspartate, in response to osmotic stress family member (LRRC8B, LRRC8C, LRRC8D or LRRC8E); channel characteristics depend on the precise subunit composition. Also acts as a regulator of glucose-sensing in pancreatic beta cells: VRAC currents, generated in response to hypotonicity- or glucose-induced beta cell swelling, depolarize cells, thereby causing electrical excitation, leading to increase glucose sensitivity and insulin secretion. VRAC channels containing LRRC8D inhibit transport of immunoreactive cyclic dinucleotide GMP-AMP (2'-3'-cGAMP), an immune messenger produced in response to DNA virus in the cytosol. This is Volume-regulated anion channel subunit LRRC8D from Mus musculus (Mouse).